The primary structure comprises 539 residues: Cytochrome P450 monooxygenase buaD (539 aa).

The signal sequence occupies residues 1 to 16 (MLVPVLTLLGTLTATG). An N-linked (GlcNAc...) asparagine glycan is attached at N120. Residue C478 coordinates heme. The N-linked (GlcNAc...) asparagine glycan is linked to N520.

The protein belongs to the cytochrome P450 family. Requires heme as cofactor.

It functions in the pathway mycotoxin biosynthesis. Cytochrome P450 monooxygenase; part of the gene cluster that mediates the biosynthesis of burnettramic acids, an unusual class of bolaamphiphilic pyrrolizidinediones that display potent antibacterial, antifungal, and cytotoxic activities. The first step of the biosynthesis of burnettramic acids is the hydroxylation of proline by the proline hydroxylase buaE to generate 4-hydroxyproline. The PKS-NRPS buaA and trans-enoyl reductase buaC construct the highly reduced polyketide chain, and the condensation (C) domain of buaA then catalyzes the amide bond formation with the activated 4-hydroxyproline. This is followed by the R domain releasing the nascent polyketide-peptide directly via a Dieckmann condensation to afford a tetramic acid fused to the hydroxyproline, generating the bicyclic pyrrolidinedione moiety. The cytochrome P450 monooxygenases buaD and buaG are likely responsible for the multiple hydroxylations on the polyketide chain and its terminus, although in the heterologous context, buaD does not appear to be required. Therefore, while buaG may be a multifunctional cytochrome P450 monooxygenase, it cannot be ruled out that the two secondary alcohols on the polyketide chain could have an acetate origin. Finally, the glycosyltransferase buaB transfers beta-D-mannose to the aglycone burnettramic acid A to form burnettramic acid A. Burnettramic acid B is a minor cis-pyrrolizidine epimer of burnettramic acid A and it is likely that small amounts of it form naturally in acidic environments. The sequence is that of Cytochrome P450 monooxygenase buaD from Petromyces alliaceus (Aspergillus alliaceus).